A 298-amino-acid polypeptide reads, in one-letter code: Short-chain dehydrogenase/reductase prx6 (298 aa).

NADP(+) is bound by residues I27, D70, N97, Y174, K178, V208, and T210. The active-site Proton acceptor is the Y174. K178 functions as the Lowers pKa of active site Tyr in the catalytic mechanism.

The protein belongs to the short-chain dehydrogenases/reductases (SDR) family.

It participates in sesquiterpene biosynthesis. In terms of biological role, short-chain dehydrogenase/reductase; part of the gene cluster that mediates the biosynthesis of PR-toxin, a bicyclic sesquiterpene belonging to the eremophilane class and acting as a mycotoxin. The first step of the pathway is catalyzed by the aristolochene synthase which performs the cyclization of trans,trans-farnesyl diphosphate (FPP) to the bicyclic sesquiterpene aristolochene. Following the formation of aristolochene, the non-oxygenated aristolochene is converted to the trioxygenated intermediate eremofortin B, via 7-epi-neopetasone. This conversion appears to involve three enzymes, a hydroxysterol oxidase-like enzyme, the quinone-oxidase prx3 that forms the quinone-type-structure in the bicyclic nucleus of aristolochene with the C8-oxo group and the C-3 hydroxyl group, and the P450 monooxygenase prx9 that introduces the epoxide at the double bond between carbons 1 and 2. No monoxy or dioxy-intermediates have been reported to be released to the broth, so these three early oxidative reactions may be coupled together. Eremofortin B is further oxidized by another P450 monooxygenase, that introduces a second epoxide between carbons 7 and 11 prior to acetylation to eremofortin A by the acetyltransferase prx11. The second epoxidation may be performed by a second P450 monooxygenase. After the acetylation step, eremofortin A is converted to eremofortin C and then to PR-toxin. First the conversion of eremofortin A to eremofortin C proceeds by oxidation of the side chain of the molecule at C-12 and is catalyzed by the short-chain oxidoreductase prx1. The cytochrome P450 monooxygenase prx8 also plays a role in this step. The primary alcohol formed at C-12 is finally oxidized by the short-chain alcohol dehydrogenase prx4 that forms PR-toxin. In Penicillium rubens (strain ATCC 28089 / DSM 1075 / NRRL 1951 / Wisconsin 54-1255) (Penicillium chrysogenum), this protein is Short-chain dehydrogenase/reductase prx6.